The sequence spans 76 residues: Large ribosomal subunit protein bL28 (76 aa).

Belongs to the bacterial ribosomal protein bL28 family.

This Opitutus terrae (strain DSM 11246 / JCM 15787 / PB90-1) protein is Large ribosomal subunit protein bL28.